A 63-amino-acid polypeptide reads, in one-letter code: Large ribosomal subunit protein uL30 (63 aa).

It belongs to the universal ribosomal protein uL30 family. In terms of assembly, part of the 50S ribosomal subunit.

The protein is Large ribosomal subunit protein uL30 of Methylobacterium sp. (strain 4-46).